A 64-amino-acid chain; its full sequence is Large ribosomal subunit protein bL35 (64 aa).

The protein belongs to the bacterial ribosomal protein bL35 family.

The polypeptide is Large ribosomal subunit protein bL35 (Aliivibrio fischeri (strain ATCC 700601 / ES114) (Vibrio fischeri)).